We begin with the raw amino-acid sequence, 192 residues long: DNA dC-&gt;dU-editing enzyme APOBEC-3Ca (192 aa).

One can recognise a CMP/dCMP-type deaminase domain in the interval 15-141 (IDPNTFRFHF…PNYQEGLCKL (127 aa)). His-69 lines the Zn(2+) pocket. Glu-71 serves as the catalytic Proton donor. Residues Cys-100 and Cys-103 each contribute to the Zn(2+) site.

It belongs to the cytidine and deoxycytidylate deaminase family. (Microbial infection) Interacts with feline foamy virus protein Bet. This interaction does not induce APOBEC3Ca degradation but prevents its dimerization and incorporation into the virion. Zn(2+) is required as a cofactor.

The protein localises to the nucleus. The protein resides in the cytoplasm. The enzyme catalyses a 2'-deoxycytidine in single-stranded DNA + H2O + H(+) = a 2'-deoxyuridine in single-stranded DNA + NH4(+). Its function is as follows. DNA deaminase (cytidine deaminase) which acts as an inhibitor of retrovirus replication and retrotransposon mobility via deaminase-dependent and -independent mechanisms. Selectively targets single-stranded DNA and does not deaminate double-stranded DNA or single- or double-stranded RNA. Does not reduce infectivity of foamy feline virus, feline immunodeficiency virus or feline leukemia virus. The protein is DNA dC-&gt;dU-editing enzyme APOBEC-3Ca of Felis catus (Cat).